We begin with the raw amino-acid sequence, 171 residues long: 3-hydroxydecanoyl-[acyl-carrier-protein] dehydratase (171 aa).

His70 is an active-site residue.

It belongs to the thioester dehydratase family. FabA subfamily. In terms of assembly, homodimer.

It is found in the cytoplasm. The catalysed reaction is a (3R)-hydroxyacyl-[ACP] = a (2E)-enoyl-[ACP] + H2O. The enzyme catalyses (3R)-hydroxydecanoyl-[ACP] = (2E)-decenoyl-[ACP] + H2O. It carries out the reaction (2E)-decenoyl-[ACP] = (3Z)-decenoyl-[ACP]. Its pathway is lipid metabolism; fatty acid biosynthesis. In terms of biological role, necessary for the introduction of cis unsaturation into fatty acids. Catalyzes the dehydration of (3R)-3-hydroxydecanoyl-ACP to E-(2)-decenoyl-ACP and then its isomerization to Z-(3)-decenoyl-ACP. Can catalyze the dehydratase reaction for beta-hydroxyacyl-ACPs with saturated chain lengths up to 16:0, being most active on intermediate chain length. The protein is 3-hydroxydecanoyl-[acyl-carrier-protein] dehydratase of Azotobacter vinelandii (strain DJ / ATCC BAA-1303).